Consider the following 61-residue polypeptide: AHRITEECTYCAACEPECPVNAISAGDEIYIVDESVCTDCEGYYDEPACVAVCPVDCIIKV.

4Fe-4S ferredoxin-type domains follow at residues 2–27 (HRIT…SAGD) and 28–61 (EIYI…IIKV). Residues C8, C11, C14, C18, C37, C40, C49, and C53 each coordinate [4Fe-4S] cluster.

[4Fe-4S] cluster serves as cofactor.

In terms of biological role, ferredoxins are iron-sulfur proteins that transfer electrons in a wide variety of metabolic reactions. The polypeptide is Ferredoxin-2 (Chlorobium limicola).